The primary structure comprises 346 residues: S-adenosylmethionine:tRNA ribosyltransferase-isomerase (346 aa).

The protein belongs to the QueA family. Monomer.

Its subcellular location is the cytoplasm. It carries out the reaction 7-aminomethyl-7-carbaguanosine(34) in tRNA + S-adenosyl-L-methionine = epoxyqueuosine(34) in tRNA + adenine + L-methionine + 2 H(+). It functions in the pathway tRNA modification; tRNA-queuosine biosynthesis. In terms of biological role, transfers and isomerizes the ribose moiety from AdoMet to the 7-aminomethyl group of 7-deazaguanine (preQ1-tRNA) to give epoxyqueuosine (oQ-tRNA). The sequence is that of S-adenosylmethionine:tRNA ribosyltransferase-isomerase from Borreliella afzelii (strain PKo) (Borrelia afzelii).